The chain runs to 623 residues: Vacuolar-sorting receptor 1 (623 aa).

Residues 1-22 (MKCWRLSAILFLGFMLTSLSTA) form the signal peptide. The Lumenal portion of the chain corresponds to 23-564 (RFVVEKNSLS…SKTASQAKST (542 aa)). Positions 54 to 163 (QYGGSMAGNV…SFGEKLKDAI (110 aa)) constitute a PA domain. Asparagine 143 is a glycosylation site (N-linked (GlcNAc...) asparagine). EGF-like domains lie at 411–461 (ETNE…TTCE) and 464–511 (GHGR…KNCE). Intrachain disulfides connect cysteine 415/cysteine 433, cysteine 422/cysteine 442, cysteine 444/cysteine 460, cysteine 468/cysteine 488, cysteine 475/cysteine 496, and cysteine 498/cysteine 510. Positions 512–554 (DIDECKDKKACQCPECSCKNTWGSYNCSCSGDLLYIKDQDTCI) constitute an EGF-like 3; calcium-binding domain. Asparagine 537 is a glycosylation site (N-linked (GlcNAc...) asparagine). The cysteines at positions 540 and 553 are disulfide-linked. A helical membrane pass occupies residues 565-585 (WAAFWVVLIALAMIAGGGFLV). Over 586 to 623 (YKYRIRQYMDSEIRAIMAQYMPLDSQEEGPNHVNHQRG) the chain is Cytoplasmic. The Tyrosine-based internalization motif signature appears at 605-608 (YMPL).

This sequence belongs to the VSR (BP-80) family. Interacts with the N-terminal propeptide of aleurein (proaleurein).

The protein localises to the membrane. It is found in the golgi apparatus membrane. The protein resides in the cytoplasmic vesicle. It localises to the clathrin-coated vesicle membrane. Its subcellular location is the prevacuolar compartment membrane. In terms of biological role, vacuolar-sorting receptor (VSR) involved in clathrin-coated vesicles sorting from Golgi apparatus to vacuoles. Seems to binds preferentially proteins containing a N-terminal NPIR motif. The protein is Vacuolar-sorting receptor 1 (BP80) of Pisum sativum (Garden pea).